The sequence spans 520 residues: Nonsense-mediated mRNA decay factor SMG9 (520 aa).

The disordered stretch occupies residues 1–143; that stretch reads MSESGHSQPG…KGEKEGQRPT (143 aa). Residue Ser2 is modified to N-acetylserine. Ser2, Ser4, Ser7, Ser32, and Ser53 each carry phosphoserine. The segment covering 36–53 has biased composition (basic and acidic residues); it reads GRERDYIAPWERERRDGS. Over residues 78-94 the composition is skewed to pro residues; that stretch reads QPPPPAAPAAPPAPAPL. Residues 109 to 121 are compositionally biased toward low complexity; sequence GPAATTSTSTPEG. The segment covering 122–133 has biased composition (pro residues); the sequence is TAPPPPAAPVPP. Ser451 is modified (phosphoserine).

This sequence belongs to the SMG9 family. As to quaternary structure, self-associates to form homodimers and forms heterodimers with SMG8; these assembly forms may represent SMG1C intermediate forms. Component of the SMG1C complex composed of SMG1, SMG8 and SMG9. Self-associates to form homodimers and forms heterodimers with SMG8; these assembly forms may represent SMG1C intermediate forms. Interacts with DHX34; the interaction is RNA-independent. Post-translationally, phosphorylated by SMG1.

In terms of biological role, involved in nonsense-mediated decay (NMD) of mRNAs containing premature stop codons. Is recruited by release factors to stalled ribosomes together with SMG1 and SMG8 (forming the SMG1C protein kinase complex) and, in the SMG1C complex, is required for the efficient association between SMG1 and SMG8. Plays a role in brain, heart, and eye development. This is Nonsense-mediated mRNA decay factor SMG9 from Bos taurus (Bovine).